The chain runs to 398 residues: Lysophospholipid transporter LplT (398 aa).

A run of 12 helical transmembrane segments spans residues 19 to 39 (VIVA…ATLA), 53 to 73 (VLQM…GQIA), 96 to 116 (ICLG…AAAY), 139 to 159 (LMEA…GVLA), 164 to 184 (IAAL…NLFI), 195 to 213 (SWQL…VVLW), 227 to 247 (LFWG…PVAL), 257 to 277 (YLNA…AKLV), 281 to 301 (TVSR…MFSL), 304 to 324 (ALLP…FFVV), 352 to 372 (NSTM…GVPA), and 373 to 393 (VATG…LWIW).

This sequence belongs to the major facilitator superfamily. LplT (TC 2.A.1.42) family.

The protein resides in the cell inner membrane. Its function is as follows. Catalyzes the facilitated diffusion of 2-acyl-glycero-3-phosphoethanolamine (2-acyl-GPE) into the cell. This Salmonella arizonae (strain ATCC BAA-731 / CDC346-86 / RSK2980) protein is Lysophospholipid transporter LplT.